A 408-amino-acid chain; its full sequence is MTQINENYLKLKAGYLFPEIGRRVKAYSDANQNAKIIRLGIGDVTLPLAPTIVNAMVDAAKEMGSAGGFHGYGPEQGYSFLIQKIIAHDYTARGVQIAEDEVFVSDGSKCDCGNIQEIFSLDSKIAVVDPVYPVYVDTNVMAGRTGEVGPDGRYANIVYMPATEENNFEPDFPKEKADIIYLCYPNNPTGMVATKARLTEWVNYAKKMGSIILYDSAYESFIQDPEIPKSIYEIPGAKEVAMEFRSFSKTAGFTGTRCAYLVIPKDLKGKTKSGEEVSFNSLWNRRHTTKFNGVSYITQKGAEAVFSAQGQVEIKEQISYYMENAKLIREGLVKAGYTVFGGTNAPYIWLKTPRGLKSWEFFDELLGTAQVVGTPGSGFGPAGEGYFRLSAFGKREDVISAIERIQKM.

Positions 15 and 42 each coordinate substrate. Residues Tyr-72, 108-109 (SK), Tyr-132, Asn-187, Tyr-218, and 246-248 (SFS) contribute to the pyridoxal 5'-phosphate site. Lys-109, Tyr-132, and Asn-187 together coordinate substrate. The residue at position 249 (Lys-249) is an N6-(pyridoxal phosphate)lysine. Pyridoxal 5'-phosphate is bound by residues Arg-257 and Asn-292. Substrate contacts are provided by Asn-292 and Arg-388.

This sequence belongs to the class-I pyridoxal-phosphate-dependent aminotransferase family. LL-diaminopimelate aminotransferase subfamily. As to quaternary structure, homodimer. It depends on pyridoxal 5'-phosphate as a cofactor.

The catalysed reaction is (2S,6S)-2,6-diaminopimelate + 2-oxoglutarate = (S)-2,3,4,5-tetrahydrodipicolinate + L-glutamate + H2O + H(+). It functions in the pathway amino-acid biosynthesis; L-lysine biosynthesis via DAP pathway; LL-2,6-diaminopimelate from (S)-tetrahydrodipicolinate (aminotransferase route): step 1/1. In terms of biological role, involved in the synthesis of meso-diaminopimelate (m-DAP or DL-DAP), required for both lysine and peptidoglycan biosynthesis. Catalyzes the direct conversion of tetrahydrodipicolinate to LL-diaminopimelate. The sequence is that of LL-diaminopimelate aminotransferase from Leptospira biflexa serovar Patoc (strain Patoc 1 / Ames).